We begin with the raw amino-acid sequence, 109 residues long: Oncomodulin (109 aa).

Serine 2 is modified (N-acetylserine). EF-hand domains are found at residues 39 to 74 (MSAS…FQSD) and 78 to 109 (LTES…MVHS). Positions 52, 54, 56, 58, 63, 91, 93, 95, 97, and 102 each coordinate Ca(2+). Residues 82 to 109 (ETKSLMDAADNDGDGKIGADEFQEMVHS) form a disordered region. Basic and acidic residues predominate over residues 94–109 (GDGKIGADEFQEMVHS).

This sequence belongs to the parvalbumin family. Found in tumor tissues and not detected in normal tissues.

Has some calmodulin-like activity with respect to enzyme activation and growth regulation. Binds two calcium ions. The sequence is that of Oncomodulin (Ocm) from Mus musculus (Mouse).